A 313-amino-acid chain; its full sequence is BTB/POZ domain-containing adapter for CUL3-mediated RhoA degradation protein 3 (313 aa).

Met1 is subject to N-acetylmethionine. Residue Ser23 is modified to Phosphoserine. Residues 32–100 (KYVKLNVGGA…LRDGAVPLPE (69 aa)) enclose the BTB domain. The PCNA-binding motif lies at 239 to 245 (QTKVEFP).

It belongs to the BACURD family. As to quaternary structure, homotetramer; forms a two-fold symmetric tetramer in solution. Interacts with CUL3; interaction is direct and forms a 5:5 heterodecamer. Component of the BCR(BACURD3) E3 ubiquitin ligase complex, at least composed of CUL3, KCTD10/BACURD3 and RBX1. Interacts with DNA polymerase delta subunit 2/POLD2. Interacts with PCNA.

It is found in the nucleus. The protein operates within protein modification; protein ubiquitination. In terms of biological role, substrate-specific adapter of a BCR (BTB-CUL3-RBX1) E3 ubiquitin-protein ligase complex. The BCR(BACURD3) E3 ubiquitin ligase complex mediates the ubiquitination of target proteins, leading to their degradation by the proteasome. The polypeptide is BTB/POZ domain-containing adapter for CUL3-mediated RhoA degradation protein 3 (KCTD10) (Homo sapiens (Human)).